A 960-amino-acid polypeptide reads, in one-letter code: Ran GTPase-activating protein 2 (960 aa).

LRR repeat units follow at residues 69–92 (HLNL…LIAE), 132–156 (GCRL…LYNF), 162–185 (LYSL…VGKA), 227–254 (LGTL…AFRM), and 313–340 (RDCL…CFNS). A disordered region spans residues 370 to 408 (NIDFGRRGDDELLSSDEEEEQGAEDASMEEDAFNTSRET). Residues 380-401 (ELLSSDEEEEQGAEDASMEEDA) are compositionally biased toward acidic residues. LRR repeat units follow at residues 475-498 (ASSM…VIAK), 538-561 (GCKI…ALKD), 568-595 (SFSL…LTEC), and 663-685 (NRNL…KALA). The tract at residues 777-819 (PENVNVGDEDDDLGSLDGDQEEYNSKSSDSEDADLDDDDEDDD) is disordered. Composition is skewed to acidic residues over residues 783–798 (GDED…DQEE) and 806–819 (SEDA…EDDD).

The protein resides in the nucleus. GTPase system comprising ran-1, ran-2 and ran-3 is essential in nucleocytoplasmic trafficking. Ran-2 is a GTPase activator for the nuclear RAS-related regulatory protein Ran, converting it to the putatively inactive GDP-bound state. Required for correct chromosome alignment and segregation on the metaphase plate. This chain is Ran GTPase-activating protein 2 (ran-2), found in Caenorhabditis elegans.